Consider the following 411-residue polypeptide: Carbohydrate sulfotransferase 1 (411 aa).

The Cytoplasmic portion of the chain corresponds to 1 to 2 (MQ). Residues 3-23 (CSWKAVLLLALASIAIQYTAI) form a helical; Signal-anchor for type II membrane protein membrane-spanning segment. Residues 24–411 (RTFTAKSFHT…VEERDFRPFS (388 aa)) lie on the Lumenal side of the membrane. The N-linked (GlcNAc...) asparagine glycan is linked to N56. Residue 69-75 (TRSGSSF) participates in 3'-phosphoadenylyl sulfate binding. N145 and N189 each carry an N-linked (GlcNAc...) asparagine glycan. A 3'-phosphoadenylyl sulfate-binding site is contributed by 234-242 (RDPRGILAS). Residue N334 is glycosylated (N-linked (GlcNAc...) asparagine). The Cell attachment site motif lies at 337–339 (RGD).

The protein belongs to the sulfotransferase 1 family. Gal/GlcNAc/GalNAc subfamily. Widely expressed at low level. Expressed in brain and skeletal muscle. Expressed by high endothelial cells (HEVs) and leukocytes.

The protein resides in the golgi apparatus membrane. It catalyses the reaction 3'-phosphoadenylyl sulfate + keratan = adenosine 3',5'-bisphosphate + keratan 6'-sulfate.. It functions in the pathway glycan metabolism. Its function is as follows. Sulfotransferase that utilizes 3'-phospho-5'-adenylyl sulfate (PAPS) as sulfonate donor to catalyze the transfer of sulfate to position 6 of internal galactose (Gal) residues of keratan. Cooperates with B4GALT4 and B3GNT7 glycosyltransferases and CHST6 sulfotransferase to construct and elongate disulfated disaccharide unit [-&gt;3(6-sulfoGalbeta)1-&gt;4(6-sulfoGlcNAcbeta)1-&gt;] within keratan sulfate polymer. Has a preference for sulfating keratan sulfate, but it also transfers sulfate to the unsulfated polymer. Involved in biosynthesis of phosphacan, a major keratan sulfate proteoglycan in the developing brain. Involved in biosynthesis of 6-sulfoGalbeta-containing O-linked glycans in high endothelial venules of lymph nodes. May act in a synergistic manner with CHST4 to generate sialyl 6',6-disulfo Lewis X motif, a recognition determinant for immune cell receptors implicated in leukocyte trafficking. Catalyzes sulfation of N-acetyllactosamine (LacNAc) oligosaccharides with highest efficiency for sialylated LacNAc structures. The sequence is that of Carbohydrate sulfotransferase 1 from Homo sapiens (Human).